The following is a 180-amino-acid chain: Immediate early response gene 2 protein (180 aa).

The tract at residues 53–135 (MSEKSGQSVT…KRRSKTATDS (83 aa)) is disordered. The span at 56–92 (KSGQSVTEECTSHTQEPMDTSSSTATPLRETSGQSSE) shows a compositional bias: polar residues. The segment covering 93–103 (DGQRSGLEGHP) has biased composition (basic and acidic residues).

Belongs to the IER family. Interacts with FIBPB.

The protein resides in the nucleus. The protein localises to the cytoplasm. DNA-binding protein that seems to act as a transcription factor. Mediates with FIBPB FGF-signaling in Kupffer's vesicle ciliogenesis and in the establishment of laterality in the embryo. In Danio rerio (Zebrafish), this protein is Immediate early response gene 2 protein.